A 422-amino-acid polypeptide reads, in one-letter code: Ferrochelatase, mitochondrial (422 aa).

A mitochondrion-targeting transit peptide spans 1–53; that stretch reads MLSASANMAAALRAAGALLREPLVHGSSRACQPWRCQSGAAVAATTEKVHHAK. Lys56 carries the N6-acetyllysine modification. The protoporphyrin IX site is built by Arg114, Tyr122, and Ser129. Lys137 is modified (N6-succinyllysine). Cys195 is a [2Fe-2S] cluster binding site. His229 is a catalytic residue. Lys289 carries the post-translational modification N6-acetyllysine; alternate. The residue at position 289 (Lys289) is an N6-succinyllysine; alternate. Asp382 is a catalytic residue. [2Fe-2S] cluster contacts are provided by Cys402, Cys405, and Cys410. At Lys414 the chain carries N6-acetyllysine; alternate. Lys414 bears the N6-succinyllysine; alternate mark.

The protein belongs to the ferrochelatase family. In terms of assembly, homodimer. Homotetramer. Interaction with PGRMC1; the interaction results in decreased FECH activity. Interacts with ABCB10 and SLC25A37; this interaction forms an oligomeric complex. Forms a complex with ABCB7 and ABCB10, where a dimeric FECH bridges ABCB7 and ABCB10 homodimers; this complex may be required for cellular iron homeostasis, mitochondrial function and heme biosynthesis. Interacts with ABCB7 and ABCB10. [2Fe-2S] cluster serves as cofactor. Erythroid and hepatic cells.

Its subcellular location is the mitochondrion inner membrane. The enzyme catalyses heme b + 2 H(+) = protoporphyrin IX + Fe(2+). It functions in the pathway porphyrin-containing compound metabolism; protoheme biosynthesis; protoheme from protoporphyrin-IX: step 1/1. Its function is as follows. Catalyzes the ferrous insertion into protoporphyrin IX. This Mus musculus (Mouse) protein is Ferrochelatase, mitochondrial.